Consider the following 340-residue polypeptide: Functional amyloid subunit FapC (340 aa).

The N-terminal stretch at 1-24 is a signal peptide; that stretch reads MKATMVLTPLALAMAAVLSVSAYA. Residues 67 to 100 form a FapC_R1 repeat; it reads NNASVSGSIKDASGNVGVNVAAGDNNQQANAAAL. Residues 101–133 form a linker 1 region; it reads ASADASFVFGTATASTSVLQSGYGNTLNNYSNP. A FapC_R2 repeat occupies 134–167; sequence NTASLSNSANNVSGNLGVNVAAGNFNQQKNDLAA. A linker 2 region spans residues 168 to 290; that stretch reads AVSNGQYSTA…AIVGFKTPVT (123 aa). Residues 291–324 form a FapC_R3 repeat; the sequence is NNASLSNSLQNVSGNVGVNIAAGGGNQQSNSLSI. The Cys-X-X-Cys motif lies at 328–331; that stretch reads CSSC.

It belongs to the FapB/FapC family. In terms of assembly, the major component of purified amyloid fibrils. Fibrils are resistant to boiling in 2% (weight/vol) SDS and require &gt;90% (vol/vol) formic acid to dissolve. Interacts with FapA in vitro.

It is found in the fimbrium. It localises to the secreted. Functionally, the major functional amyloid subunit in this bacterium. Upon overexpression of the endogenous six-gene locus (fapA-fapF), cells form large clumps during liquid growth, make large amounts of biofilm and produce amyloid fibrils. The polypeptide is Functional amyloid subunit FapC (Pseudomonas aeruginosa (strain ATCC 15692 / DSM 22644 / CIP 104116 / JCM 14847 / LMG 12228 / 1C / PRS 101 / PAO1)).